Here is a 443-residue protein sequence, read N- to C-terminus: ATP-dependent protease ATPase subunit HslU (443 aa).

Residues I20, 62–67 (GVGKTE), D255, E321, and R393 contribute to the ATP site.

Belongs to the ClpX chaperone family. HslU subfamily. A double ring-shaped homohexamer of HslV is capped on each side by a ring-shaped HslU homohexamer. The assembly of the HslU/HslV complex is dependent on binding of ATP.

The protein localises to the cytoplasm. Its function is as follows. ATPase subunit of a proteasome-like degradation complex; this subunit has chaperone activity. The binding of ATP and its subsequent hydrolysis by HslU are essential for unfolding of protein substrates subsequently hydrolyzed by HslV. HslU recognizes the N-terminal part of its protein substrates and unfolds these before they are guided to HslV for hydrolysis. In Helicobacter pylori (strain HPAG1), this protein is ATP-dependent protease ATPase subunit HslU.